We begin with the raw amino-acid sequence, 224 residues long: UPF0758 protein Hhal_2301 (224 aa).

The 123-residue stretch at 102–224 (TLSSPAQTRT…PVSLAERGVL (123 aa)) folds into the MPN domain. Residues histidine 173, histidine 175, and aspartate 186 each contribute to the Zn(2+) site. The JAMM motif motif lies at 173 to 186 (HNHPSGITEPSAAD).

The protein belongs to the UPF0758 family.

This is UPF0758 protein Hhal_2301 from Halorhodospira halophila (strain DSM 244 / SL1) (Ectothiorhodospira halophila (strain DSM 244 / SL1)).